A 243-amino-acid chain; its full sequence is 7-carboxy-7-deazaguanine synthase (243 aa).

Substrate contacts are provided by residues 15–17 and R30; that span reads IQG. Residues 21–239 enclose the Radical SAM core domain; it reads VIGQKTMFVR…PQLHTLLWGN (219 aa). Positions 34, 38, and 41 each coordinate [4Fe-4S] cluster. S43 serves as a coordination point for Mg(2+). Residue S81 coordinates substrate. Residues G83 and 127 to 129 contribute to the S-adenosyl-L-methionine site; that span reads SPK.

It belongs to the radical SAM superfamily. 7-carboxy-7-deazaguanine synthase family. In terms of assembly, homodimer. [4Fe-4S] cluster serves as cofactor. Requires S-adenosyl-L-methionine as cofactor. The cofactor is Mg(2+).

It catalyses the reaction 6-carboxy-5,6,7,8-tetrahydropterin + H(+) = 7-carboxy-7-deazaguanine + NH4(+). It functions in the pathway purine metabolism; 7-cyano-7-deazaguanine biosynthesis. Functionally, catalyzes the complex heterocyclic radical-mediated conversion of 6-carboxy-5,6,7,8-tetrahydropterin (CPH4) to 7-carboxy-7-deazaguanine (CDG), a step common to the biosynthetic pathways of all 7-deazapurine-containing compounds. This Bacillus subtilis (strain 168) protein is 7-carboxy-7-deazaguanine synthase.